Reading from the N-terminus, the 189-residue chain is Elongation factor P (189 aa).

This sequence belongs to the elongation factor P family.

The protein localises to the cytoplasm. It participates in protein biosynthesis; polypeptide chain elongation. Functionally, involved in peptide bond synthesis. Stimulates efficient translation and peptide-bond synthesis on native or reconstituted 70S ribosomes in vitro. Probably functions indirectly by altering the affinity of the ribosome for aminoacyl-tRNA, thus increasing their reactivity as acceptors for peptidyl transferase. In Rhizobium radiobacter (Agrobacterium tumefaciens), this protein is Elongation factor P.